The chain runs to 665 residues: SH3 domain-containing kinase-binding protein 1 (665 aa).

SH3 domains lie at 1-58 (MVEA…EIKK) and 98-157 (RRRR…ELSG). Phosphoserine is present on residues S156, S159, S183, and S230. Residues 159-200 (SDELGISQDEQLSKSSLRETTGSESDGGDSSSTKSEGANGTV) are disordered. A compositionally biased stretch (low complexity) spans 177-195 (ETTGSESDGGDSSSTKSEG). Phosphothreonine is present on T254. Residues 267–328 (KSKDYCKVIF…PDNFVKLLPP (62 aa)) form the SH3 3 domain. 2 disordered regions span residues 328 to 444 (PDFE…LAGS) and 467 to 610 (DSVV…AAVE). Basic and acidic residues predominate over residues 355–390 (TERKHEIKKIPPERPEMLPNRTEEKERPEREPKLDL). S436 is subject to Phosphoserine. A compositionally biased stretch (polar residues) spans 469 to 484 (VVSSTEKLSHPTTSRP). A compositionally biased stretch (low complexity) spans 491–510 (PPSQSLTSSSLSSPDIFDSP). A phosphoserine mark is found at S509, S511, and S521. Residues 517-531 (EEHISLAHRGVDASK) are compositionally biased toward basic and acidic residues. The span at 535–546 (KTVTISQVSDNK) shows a compositional bias: polar residues. Over residues 564 to 582 (APLSSAAPSPLSSSLGTAG) the composition is skewed to low complexity. S587 carries the phosphoserine modification. Residues 602 to 664 (AASSQAAVEE…VNDIKKALQS (63 aa)) adopt a coiled-coil conformation.

As to quaternary structure, can self-associate and form homotetramers. Interacts with CD2, F-actin capping protein, PIK3R3, GRB2, EGFR, MET, BLNK, MAP3K4, PDCD6IP, SPRY2, ARHGAP17, ARHGAP27, MAGI2, CRK, BCAR1, SOS1, ASAP1, ARAP3, HIP1R, SYNJ2, INPP5D and STAP1. Interacts with E3 ubiquitin-protein ligases CBL and CBLB, but does not interact with CBLC. Two molecules of SH3KBP1 seem to bind through their respective SH3 1 domain to one molecule of CBLB. The interaction with CBL or CBLB and EGFR is increased upon EGF stimulation. The interaction with CBL is attenuated by PDCD6IP. Interacts (via SH3 domains) with ARAP1. The interaction is independent of EGF and does not affect ARAP1 GTPase-activating activity but is involved in regulating ubiquitination and endocytic trafficking of EGFR. ARAP1 competes with CBL for binding to SH3KBP1 and prevents interaction of CBL with SH3KBP1; this is likely to regulate SH3KBP1-mediated internalization of EGFR. Interacts through its proline-rich region with the SH3 domain of endophilins SH3GL1, SH3GL2 and SH3GL3. The SH3KBP1-endophilin complex seems to associate with a complex containing the phosphorylated receptor (EGFR or MET) and phosphorylated CBL. Probably associates with ASAP1 and phosphorylated EGFR. Probably part of a complex consisting of at least SH3KBP1, ASAP1 and ARAP3. Interacts with focal adhesion kinases PTK2/FAK1 and PTK2B/PYK2, probably as a dimer. Interacts with DAB2 and probably associates with chathrin through its interaction with DAB2. Part of a complex consisting of SH3KBP1, DAB2, and clathrin heavy chain. DAB2 and clathrin dissociate from SH3KBP1 following growth factor treatment, enabling interaction with CBL. Interacts with DDN and probably associates with MAGI2 through its interaction with DDN. Interacts with the SH3 domains of SRC tyrosine-protein kinases SRC, LCK, LYN, FGR, FYN and HCK. Interacts with TRADD, BIRC2, TRAF1, TRAF2 and TNFR1, and the association with a TNFR1-associated complex upon stimulation with TNF-alpha seems to be mediated by SRC. Interacts (via SH3 domains) with SHKBP1 (via PXXXPR motifs). Interaction with CBL is abolished in the presence of SHKBP1. Interacts (via SH3 domains) with ZFP36 (via extreme C-terminal region). Interacts with MAP3K4; this interaction enhances the association with ZFP36. (Microbial infection) Interacts (via SH3 domains) with Chikungunya virus non-structural protein 3 (via C-terminus); this interaction plays a role in initiation of viral replication. Monoubiquitinated by CBL and CBLB after EGF stimulation; probably on its C-terminus. In terms of tissue distribution, ubiquitously expressed. Also expressed in some cancer cell lines.

Its subcellular location is the cytoplasm. The protein localises to the cytoskeleton. It is found in the cytoplasmic vesicle membrane. It localises to the synapse. The protein resides in the synaptosome. Its subcellular location is the cell junction. The protein localises to the focal adhesion. In terms of biological role, adapter protein involved in regulating diverse signal transduction pathways. Involved in the regulation of endocytosis and lysosomal degradation of ligand-induced receptor tyrosine kinases, including EGFR and MET/hepatocyte growth factor receptor, through an association with CBL and endophilins. The association with CBL, and thus the receptor internalization, may be inhibited by an interaction with PDCD6IP and/or SPRY2. Involved in regulation of ligand-dependent endocytosis of the IgE receptor. Attenuates phosphatidylinositol 3-kinase activity by interaction with its regulatory subunit. May be involved in regulation of cell adhesion; promotes the interaction between TTK2B and PDCD6IP. May be involved in the regulation of cellular stress response via the MAPK pathways through its interaction with MAP3K4. Is involved in modulation of tumor necrosis factor mediated apoptosis. Plays a role in the regulation of cell morphology and cytoskeletal organization. Required in the control of cell shape and migration. Has an essential role in the stimulation of B cell activation. This is SH3 domain-containing kinase-binding protein 1 (SH3KBP1) from Homo sapiens (Human).